Consider the following 228-residue polypeptide: Small ribosomal subunit protein uS3 (228 aa).

In terms of domain architecture, KH type-2 spans 39–107 (TREYLQDKLK…PVHINIEEIR (69 aa)).

Belongs to the universal ribosomal protein uS3 family. As to quaternary structure, part of the 30S ribosomal subunit. Forms a tight complex with proteins S10 and S14.

Its function is as follows. Binds the lower part of the 30S subunit head. Binds mRNA in the 70S ribosome, positioning it for translation. The chain is Small ribosomal subunit protein uS3 from Pseudomonas entomophila (strain L48).